The sequence spans 106 residues: MVKQIESKTAFQEALDAAGDKLVVVDFSATWCGPCKMIKPFFHSLSEKYSNVIFLEVDVDDCQDVASECEVKCMPTFQFFFKKGQKVGEFSGANKEKLEATINELV.

N6-acetyllysine is present on Lys-3. A Thioredoxin domain is found at 3–106 (KQIESKTAFQ…KLEATINELV (104 aa)). At Lys-8 the chain carries N6-succinyllysine. Active-site nucleophile residues include Cys-32 and Cys-35. A disulfide bridge connects residues Cys-32 and Cys-35. N6-acetyllysine is present on Lys-39. An S-nitrosocysteine mark is found at Cys-62 and Cys-69. S-nitrosocysteine; alternate is present on Cys-73. Position 95 is an N6-acetyllysine; alternate (Lys-95). Lys-95 is modified (N6-succinyllysine; alternate).

Belongs to the thioredoxin family. Homodimer; disulfide-linked. Interacts with TXNIP through the redox-active site. Interacts with MAP3K5 and CASP3. Interacts with APEX1; the interaction stimulates the FOS/JUN AP-1 DNA-binding activity in a redox-dependent manner. In the fully reduced protein, both Cys-69 and Cys-73 are nitrosylated in response to nitric oxide (NO). When two disulfide bonds are present in the protein, only Cys-73 is nitrosylated. Cys-73 can serve as donor for nitrosylation of target proteins.

It localises to the nucleus. The protein localises to the cytoplasm. The protein resides in the secreted. Participates in various redox reactions through the reversible oxidation of its active center dithiol to a disulfide and catalyzes dithiol-disulfide exchange reactions. Plays a role in the reversible S-nitrosylation of cysteine residues in target proteins, and thereby contributes to the response to intracellular nitric oxide. Nitrosylates the active site Cys of CASP3 in response to nitric oxide (NO), and thereby inhibits caspase-3 activity. Induces the FOS/JUN AP-1 DNA binding activity in ionizing radiation (IR) cells through its oxidation/reduction status and stimulates AP-1 transcriptional activity. In Pongo abelii (Sumatran orangutan), this protein is Thioredoxin (TXN).